The following is a 172-amino-acid chain: Transcriptional repressor NrdR (172 aa).

A zinc finger lies at 3–34 (CPFCSYSDNRVLESRLAEEGESVRRRRECKQC). The 91-residue stretch at 49–139 (TVVIKRNGRR…VYRKFKGVAD (91 aa)) folds into the ATP-cone domain.

Belongs to the NrdR family. Requires Zn(2+) as cofactor.

Negatively regulates transcription of bacterial ribonucleotide reductase nrd genes and operons by binding to NrdR-boxes. The sequence is that of Transcriptional repressor NrdR from Gloeobacter violaceus (strain ATCC 29082 / PCC 7421).